A 512-amino-acid polypeptide reads, in one-letter code: 3-ketoacyl-CoA synthase 9 (512 aa).

Transmembrane regions (helical) follow at residues 44 to 64 (LITHLFKLCLVPLMAVLVTEI) and 83 to 103 (LVAFIFLSALAIFGSTVYIMS). One can recognise an FAE domain in the interval 100 to 389 (YIMSRPRSVY…FFMTLVTKKL (290 aa)). Residues Cys244, His323, His407, His411, His440, and Asn444 contribute to the active site.

This sequence belongs to the thiolase-like superfamily. Chalcone/stilbene synthases family. Expressed in seedlings, stems, leaves, flowers and siliques. Expressed in roots, leaves, and stems, including epidermis, silique walls, sepals, the upper portion of the styles, and seed coats, but not in developing embryos.

The protein resides in the endoplasmic reticulum membrane. It catalyses the reaction a very-long-chain acyl-CoA + malonyl-CoA + H(+) = a very-long-chain 3-oxoacyl-CoA + CO2 + CoA. It functions in the pathway lipid metabolism; fatty acid biosynthesis. Functionally, involved in the elongation of C22 to C24 fatty acids, which are precursors for the biosynthesis of cuticular waxes, aliphatic suberins, and membrane lipids, including sphingolipids and phospholipids. The polypeptide is 3-ketoacyl-CoA synthase 9 (Arabidopsis thaliana (Mouse-ear cress)).